The following is a 300-amino-acid chain: Quinolinate synthase (300 aa).

Positions 21 and 38 each coordinate iminosuccinate. A [4Fe-4S] cluster-binding site is contributed by Cys-83. Residues 109 to 111 (YVN) and Ser-126 each bind iminosuccinate. Cys-170 serves as a coordination point for [4Fe-4S] cluster. Iminosuccinate-binding positions include 196–198 (HPE) and Thr-213. Cys-256 lines the [4Fe-4S] cluster pocket.

It belongs to the quinolinate synthase family. Type 2 subfamily. As to quaternary structure, monomer. Homodimer. [4Fe-4S] cluster serves as cofactor.

It is found in the cytoplasm. The catalysed reaction is iminosuccinate + dihydroxyacetone phosphate = quinolinate + phosphate + 2 H2O + H(+). It functions in the pathway cofactor biosynthesis; NAD(+) biosynthesis; quinolinate from iminoaspartate: step 1/1. Functionally, catalyzes the condensation of iminoaspartate with dihydroxyacetone phosphate to form quinolinate. This Pyrococcus horikoshii (strain ATCC 700860 / DSM 12428 / JCM 9974 / NBRC 100139 / OT-3) protein is Quinolinate synthase.